Reading from the N-terminus, the 120-residue chain is NAD(P)H-quinone oxidoreductase subunit 3, chloroplastic (120 aa).

A run of 3 helical transmembrane segments spans residues 10-30 (FWVFLIISSLIPILAFLISGV), 64-84 (IFALVFVVFDVETVFLYPWAM), and 88-108 (VLGVSVFIEALVFVLILIVGS).

It belongs to the complex I subunit 3 family. In terms of assembly, NDH is composed of at least 16 different subunits, 5 of which are encoded in the nucleus.

Its subcellular location is the plastid. It is found in the chloroplast thylakoid membrane. The enzyme catalyses a plastoquinone + NADH + (n+1) H(+)(in) = a plastoquinol + NAD(+) + n H(+)(out). The catalysed reaction is a plastoquinone + NADPH + (n+1) H(+)(in) = a plastoquinol + NADP(+) + n H(+)(out). Functionally, NDH shuttles electrons from NAD(P)H:plastoquinone, via FMN and iron-sulfur (Fe-S) centers, to quinones in the photosynthetic chain and possibly in a chloroplast respiratory chain. The immediate electron acceptor for the enzyme in this species is believed to be plastoquinone. Couples the redox reaction to proton translocation, and thus conserves the redox energy in a proton gradient. The polypeptide is NAD(P)H-quinone oxidoreductase subunit 3, chloroplastic (Pelargonium hortorum (Common geranium)).